The following is a 194-amino-acid chain: uncharacterized protein (194 aa).

This sequence belongs to the mimivirus R457/R459 family.

The protein localises to the virion. This is an uncharacterized protein from Acanthamoeba polyphaga mimivirus (APMV).